A 247-amino-acid polypeptide reads, in one-letter code: Sensory rhodopsin-1 (247 aa).

The Extracellular segment spans residues 1 to 4; that stretch reads MTGA. A helical membrane pass occupies residues 5-26; the sequence is VSAAYWIAAVAFLVGLGITAAL. Topologically, residues 27–35 are cytoplasmic; it reads YAKLGESED. Residues 36–57 form a helical membrane-spanning segment; it reads RGRLAALAVIPGFAGLAYAGMA. The Extracellular portion of the chain corresponds to 58-71; that stretch reads LGIGTVTVNGAELV. Residues 72 to 93 traverse the membrane as a helical segment; the sequence is GLRYVDWIVTTPLLVGFIGYVA. Topologically, residues 94 to 96 are cytoplasmic; that stretch reads GAS. A helical transmembrane segment spans residues 97 to 119; it reads RRAIAGVMLADALMIAFGAGAVV. Residues 120–123 lie on the Extracellular side of the membrane; it reads TGGT. The helical transmembrane segment at 124–151 threads the bilayer; sequence LKWVLFGVSSIFHVTLFAYLYVVFPRAV. The Cytoplasmic segment spans residues 152-154; it reads PDD. The helical transmembrane segment at 155 to 182 threads the bilayer; sequence PMQRGLFSLLKNHVGLLWLAYPFVWLMG. Topologically, residues 183 to 190 are extracellular; sequence PAGIGFTT. A helical membrane pass occupies residues 191-223; it reads GVGAALTYAFLDVLAKVPYVYFFYARRQAFTDV. K206 carries the N6-(retinylidene)lysine modification. Residues 224 to 247 lie on the Cytoplasmic side of the membrane; it reads VSAATADREDATDAVGDGAPTAAD.

The protein belongs to the archaeal/bacterial/fungal opsin family. Interacts with HTR-I.

The protein localises to the cell membrane. Its function is as follows. Involved in the control of phototaxis. Mediates both photoattractant (in the orange light) and photophobic (in the near UV light) responses. The signal is then transmitted to the sensory rhodopsin I transducer (HTR-I). This Halobacterium sp. (strain SG1) protein is Sensory rhodopsin-1 (sop1).